The sequence spans 307 residues: D-alanine--D-alanine ligase (307 aa).

Residues 105–304 enclose the ATP-grasp domain; that stretch reads KMLWKGFGLP…FEQLVVKILE (200 aa). Residue 135–190 participates in ATP binding; sequence VERLGLPLMVKPSREGSSVGLTKVNAVEELKNAVDLALTHDDTVLIEEWLSGIEMT. Aspartate 258, glutamate 271, and asparagine 273 together coordinate Mg(2+).

This sequence belongs to the D-alanine--D-alanine ligase family. The cofactor is Mg(2+). Requires Mn(2+) as cofactor.

The protein localises to the cytoplasm. It catalyses the reaction 2 D-alanine + ATP = D-alanyl-D-alanine + ADP + phosphate + H(+). The protein operates within cell wall biogenesis; peptidoglycan biosynthesis. Functionally, cell wall formation. The chain is D-alanine--D-alanine ligase from Mannheimia succiniciproducens (strain KCTC 0769BP / MBEL55E).